Here is a 344-residue protein sequence, read N- to C-terminus: tRNA-specific 2-thiouridylase MnmA (344 aa).

ATP is bound by residues 9 to 16 (AMSGGVDS) and Met34. Cys92 functions as the Nucleophile in the catalytic mechanism. Cys92 and Cys188 are joined by a disulfide. Residue Gly116 coordinates ATP. Positions 138–140 (KDQ) are interaction with tRNA. Cys188 (cysteine persulfide intermediate) is an active-site residue.

Belongs to the MnmA/TRMU family.

The protein resides in the cytoplasm. The catalysed reaction is S-sulfanyl-L-cysteinyl-[protein] + uridine(34) in tRNA + AH2 + ATP = 2-thiouridine(34) in tRNA + L-cysteinyl-[protein] + A + AMP + diphosphate + H(+). Its function is as follows. Catalyzes the 2-thiolation of uridine at the wobble position (U34) of tRNA, leading to the formation of s(2)U34. In Desulfotalea psychrophila (strain LSv54 / DSM 12343), this protein is tRNA-specific 2-thiouridylase MnmA.